We begin with the raw amino-acid sequence, 115 residues long: MNAPPAFESFLLFEGEKITINKDTKVPKACLFTINKEDHTLGNIIKSQLLKDPQVLFAGYKVPHPLEHKIIIRVQTTPDYSPQEAFTNAITDLISELSLLEERFRTCLLPLRLLP.

Belongs to the archaeal Rpo11/eukaryotic RPB11/RPC19 RNA polymerase subunit family. In terms of assembly, component of the RNA polymerase II (Pol II) complex consisting of 12 subunits. As to expression, ubiquitously expressed.

It is found in the nucleus. In terms of biological role, DNA-dependent RNA polymerase catalyzes the transcription of DNA into RNA using the four ribonucleoside triphosphates as substrates. Component of RNA polymerase II which synthesizes mRNA precursors and many functional non-coding RNAs. Pol II is the central component of the basal RNA polymerase II transcription machinery. It is composed of mobile elements that move relative to each other. RPB11 is part of the core element with the central large cleft. The sequence is that of DNA-directed RNA polymerase II subunit RPB11-b1 (POLR2J2) from Homo sapiens (Human).